Here is a 209-residue protein sequence, read N- to C-terminus: Large ribosomal subunit protein uL3 (209 aa).

Residue Q150 is modified to N5-methylglutamine.

It belongs to the universal ribosomal protein uL3 family. In terms of assembly, part of the 50S ribosomal subunit. Forms a cluster with proteins L14 and L19. In terms of processing, methylated by PrmB.

Functionally, one of the primary rRNA binding proteins, it binds directly near the 3'-end of the 23S rRNA, where it nucleates assembly of the 50S subunit. The polypeptide is Large ribosomal subunit protein uL3 (Proteus mirabilis (strain HI4320)).